The sequence spans 448 residues: Alpha-2B adrenergic receptor (448 aa).

The Extracellular portion of the chain corresponds to Met-1–Thr-12. Residues Ala-13 to Leu-38 form a helical membrane-spanning segment. The Cytoplasmic portion of the chain corresponds to Thr-39–Leu-49. A helical membrane pass occupies residues Phe-50–Leu-75. Topologically, residues Gly-76–Cys-85 are extracellular. A disulfide bond links Cys-85 and Cys-163. Residues Glu-86 to Leu-108 form a helical membrane-spanning segment. Topologically, residues Asp-109–Lys-130 are cytoplasmic. A helical membrane pass occupies residues Cys-131–Asp-153. Topologically, residues Gln-154–Glu-168 are extracellular. The chain crosses the membrane as a helical span at residues Ala-169–Leu-192. The Cytoplasmic portion of the chain corresponds to Arg-193–Val-370. Residues Arg-203 to Gln-326 are disordered. Residues Ala-293–Glu-309 are compositionally biased toward acidic residues. A helical membrane pass occupies residues Leu-371 to Ile-394. The Extracellular portion of the chain corresponds to Cys-395 to His-403. Residues Gly-404–Phe-427 traverse the membrane as a helical segment. Over Asn-428–Trp-448 the chain is Cytoplasmic. Cys-440 carries S-palmitoyl cysteine lipidation.

This sequence belongs to the G-protein coupled receptor 1 family. Adrenergic receptor subfamily. ADRA2B sub-subfamily. As to quaternary structure, interacts with RAB26. Interacts with PPP1R9B.

Its subcellular location is the cell membrane. In terms of biological role, alpha-2 adrenergic receptors mediate the catecholamine-induced inhibition of adenylate cyclase through the action of G proteins. The sequence is that of Alpha-2B adrenergic receptor (ADRA2B) from Cavia porcellus (Guinea pig).